The following is a 484-amino-acid chain: Fumarate hydratase class II (484 aa).

Residues 1 to 22 (MPSILDLPIGTGATGKRKESDS) form a disordered region. Substrate contacts are provided by residues 110-112 (SGT), 141-144 (HPND), 151-153 (SSN), and Thr-199. The active-site Proton donor/acceptor is the His-200. Ser-330 is an active-site residue. Residues Ser-331 and 336–338 (KVN) each bind substrate.

Belongs to the class-II fumarase/aspartase family. Fumarase subfamily. In terms of assembly, homotetramer.

The protein localises to the cytoplasm. The catalysed reaction is (S)-malate = fumarate + H2O. Its pathway is carbohydrate metabolism; tricarboxylic acid cycle; (S)-malate from fumarate: step 1/1. In terms of biological role, involved in the TCA cycle. Catalyzes the stereospecific interconversion of fumarate to L-malate. The chain is Fumarate hydratase class II from Methanosarcina acetivorans (strain ATCC 35395 / DSM 2834 / JCM 12185 / C2A).